The chain runs to 572 residues: MRLSQFWLVTKKESPAEAEVISHQLMLRAGMIRQTAVGIYSWLPLGLRVLNKVSAIIREEMDRAGALEVVMPAAQPAELWQESGRWHAYGPELQRFIDRHQRDYCIGPTHEEVVTDLVRRDLSSYKQLPVNLYQIQTKFRDEIRPRFGVMRGREFVMKDGYSFDLDVAGMKNSYQKMYDAYCRIFDRLGLNYRPVIADNGAIGGTGSHEFHVLAETGEDSIAFSNASDYAANIEKAEALPPTKPRPAPSLEMEKRATPDCKTIAQLVERYQLPIEKTLKTLLVEGADGGIVALVLRGDHELNTIKAEQLPEVAKPFSLAEESKVRGLMGAGFGSLGPVGLKALSVPVIVDHSAAICADFVVGANEDGYHYFNVNWERDAEITRTADIRNVVEGDPSPDGQGTLLIRRGIEVGHVFQLGEKYSKAMNLTVPLEDGTLCTPLMGCYGIGVTRVIAAAIEQNHDENGIIWSKELAPFSVAILPINADKSEAVRDAAEALYQKFLQAGVDVVLDDRNRRAGVMFADIDLIGIPARIVISDKTLATGSVEFKRRNEQETFHISLEEIVAQFCAEEKH.

It belongs to the class-II aminoacyl-tRNA synthetase family. ProS type 1 subfamily. In terms of assembly, homodimer.

It localises to the cytoplasm. It carries out the reaction tRNA(Pro) + L-proline + ATP = L-prolyl-tRNA(Pro) + AMP + diphosphate. In terms of biological role, catalyzes the attachment of proline to tRNA(Pro) in a two-step reaction: proline is first activated by ATP to form Pro-AMP and then transferred to the acceptor end of tRNA(Pro). As ProRS can inadvertently accommodate and process non-cognate amino acids such as alanine and cysteine, to avoid such errors it has two additional distinct editing activities against alanine. One activity is designated as 'pretransfer' editing and involves the tRNA(Pro)-independent hydrolysis of activated Ala-AMP. The other activity is designated 'posttransfer' editing and involves deacylation of mischarged Ala-tRNA(Pro). The misacylated Cys-tRNA(Pro) is not edited by ProRS. This chain is Proline--tRNA ligase, found in Dichelobacter nodosus (strain VCS1703A).